Here is a 323-residue protein sequence, read N- to C-terminus: Lipoyl synthase (323 aa).

Residues C61, C66, C72, C87, C91, C94, and S303 each contribute to the [4Fe-4S] cluster site. The Radical SAM core domain occupies 73-292 (WTKKTATFLV…EQYGLSIGIP (220 aa)).

It belongs to the radical SAM superfamily. Lipoyl synthase family. [4Fe-4S] cluster is required as a cofactor.

Its subcellular location is the cytoplasm. It carries out the reaction [[Fe-S] cluster scaffold protein carrying a second [4Fe-4S](2+) cluster] + N(6)-octanoyl-L-lysyl-[protein] + 2 oxidized [2Fe-2S]-[ferredoxin] + 2 S-adenosyl-L-methionine + 4 H(+) = [[Fe-S] cluster scaffold protein] + N(6)-[(R)-dihydrolipoyl]-L-lysyl-[protein] + 4 Fe(3+) + 2 hydrogen sulfide + 2 5'-deoxyadenosine + 2 L-methionine + 2 reduced [2Fe-2S]-[ferredoxin]. It functions in the pathway protein modification; protein lipoylation via endogenous pathway; protein N(6)-(lipoyl)lysine from octanoyl-[acyl-carrier-protein]: step 2/2. Its function is as follows. Catalyzes the radical-mediated insertion of two sulfur atoms into the C-6 and C-8 positions of the octanoyl moiety bound to the lipoyl domains of lipoate-dependent enzymes, thereby converting the octanoylated domains into lipoylated derivatives. The chain is Lipoyl synthase from Protochlamydia amoebophila (strain UWE25).